The chain runs to 276 residues: Ribosomal RNA small subunit methyltransferase A (276 aa).

S-adenosyl-L-methionine is bound by residues His15, Leu17, Gly42, Glu64, Asp89, and Asn108.

This sequence belongs to the class I-like SAM-binding methyltransferase superfamily. rRNA adenine N(6)-methyltransferase family. RsmA subfamily.

The protein resides in the cytoplasm. It catalyses the reaction adenosine(1518)/adenosine(1519) in 16S rRNA + 4 S-adenosyl-L-methionine = N(6)-dimethyladenosine(1518)/N(6)-dimethyladenosine(1519) in 16S rRNA + 4 S-adenosyl-L-homocysteine + 4 H(+). Specifically dimethylates two adjacent adenosines (A1518 and A1519) in the loop of a conserved hairpin near the 3'-end of 16S rRNA in the 30S particle. May play a critical role in biogenesis of 30S subunits. In Prochlorococcus marinus (strain MIT 9515), this protein is Ribosomal RNA small subunit methyltransferase A.